The primary structure comprises 312 residues: D-apiose import binding protein (312 aa).

Positions 1 to 26 are cleaved as a signal peptide; sequence MKASKRWVALAAATLTLFTATGTAQA. Residues N39, 115–116, 162–164, R168, N218, D243, and Q263 each bind D-apiofuranose; these read DR and DIN.

This sequence belongs to the bacterial solute-binding protein 2 family.

It is found in the periplasm. Functionally, part of an ABC transporter complex involved in D-apiose import. Binds D-apiose, D-ribose and D-ribulose. This is D-apiose import binding protein from Paraburkholderia graminis (strain ATCC 700544 / DSM 17151 / LMG 18924 / NCIMB 13744 / C4D1M).